We begin with the raw amino-acid sequence, 425 residues long: MLDLKFIRDNLDLVKRSIKARGLVLDIDKLIYLDDKRKKLITKIGELNAKRNENSSKMQENLDKVLKISLIETGKILKKQLIDLEEELERVSVDFDLENKKVPNILSPDVPIGSSEEDNFEIKRVGVVPQFDFKPKDHLELGRDLDLLDFDRAREISGSKFYYLKNEAVFLEIALINFSLNKLRDKGFDVFITPDVAREFIVDGIGFNPRGNESNIYKIEDTDKYLVGTSEITLGGYYYNKIIDLTLPIRMAGFSHCFRKEAGAYGQLSKGLYRVHQFSKVEMFCFCKAEESGVIHDEFLSIQEQIFTELEIPYRVLNICSFDLGSPAYKKYDIEAWMPGRDGKGGYGEVTSTSNCTDYQSRRLKIRYKDQDGQNKFAHMVNGTAIATTRVIISILENFQDQKGGVRIPKSLVKYTGFDYIPFKN.

Position 229–231 (229–231) interacts with L-serine; the sequence is TSE. ATP-binding positions include 259 to 261 and Val275; that span reads RKE. Position 282 (Glu282) interacts with L-serine. 349 to 352 is an ATP binding site; it reads EVTS. Residue Thr384 coordinates L-serine.

Belongs to the class-II aminoacyl-tRNA synthetase family. Type-1 seryl-tRNA synthetase subfamily. In terms of assembly, homodimer. The tRNA molecule binds across the dimer.

The protein localises to the cytoplasm. The enzyme catalyses tRNA(Ser) + L-serine + ATP = L-seryl-tRNA(Ser) + AMP + diphosphate + H(+). The catalysed reaction is tRNA(Sec) + L-serine + ATP = L-seryl-tRNA(Sec) + AMP + diphosphate + H(+). It functions in the pathway aminoacyl-tRNA biosynthesis; selenocysteinyl-tRNA(Sec) biosynthesis; L-seryl-tRNA(Sec) from L-serine and tRNA(Sec): step 1/1. Functionally, catalyzes the attachment of serine to tRNA(Ser). Is also able to aminoacylate tRNA(Sec) with serine, to form the misacylated tRNA L-seryl-tRNA(Sec), which will be further converted into selenocysteinyl-tRNA(Sec). This chain is Serine--tRNA ligase, found in Borreliella burgdorferi (strain ATCC 35210 / DSM 4680 / CIP 102532 / B31) (Borrelia burgdorferi).